We begin with the raw amino-acid sequence, 362 residues long: Porin Omp2b (362 aa).

Positions 1–22 (MNIKSLLLGSAAALVAASGAQA) are cleaved as a signal peptide.

Belongs to the alphaproteobacteria porin family. Homotrimer.

It localises to the cell outer membrane. Its function is as follows. Forms passive diffusion pores that allow small molecular weight hydrophilic materials across the outer membrane. The protein is Porin Omp2b (omp2b) of Brucella neotomae.